Here is a 208-residue protein sequence, read N- to C-terminus: Ribonuclease HII (208 aa).

An RNase H type-2 domain is found at 11-203 (GPVAGVDEAG…VAAAHEQWLK (193 aa)). Residues Asp-17, Glu-18, and Asp-112 each coordinate a divalent metal cation.

Belongs to the RNase HII family. Mn(2+) is required as a cofactor. Mg(2+) serves as cofactor.

It is found in the cytoplasm. The enzyme catalyses Endonucleolytic cleavage to 5'-phosphomonoester.. In terms of biological role, endonuclease that specifically degrades the RNA of RNA-DNA hybrids. The polypeptide is Ribonuclease HII (Corynebacterium jeikeium (strain K411)).